Consider the following 64-residue polypeptide: Large ribosomal subunit protein bL35 (64 aa).

Residues 1–14 (MKQKTHKGTAKRVK) are compositionally biased toward basic residues. The disordered stretch occupies residues 1-50 (MKQKTHKGTAKRVKITGSGKLRREQANRRHLLEGKPSKRTRRLKGTEDVA). Residues 21–36 (LRREQANRRHLLEGKP) show a composition bias toward basic and acidic residues.

The protein belongs to the bacterial ribosomal protein bL35 family.

The sequence is that of Large ribosomal subunit protein bL35 from Corynebacterium diphtheriae (strain ATCC 700971 / NCTC 13129 / Biotype gravis).